A 580-amino-acid chain; its full sequence is Small conductance calcium-activated potassium channel protein 2 (580 aa).

Disordered regions lie at residues 1-68 (MSSC…VSKP) and 88-116 (GGGGGGGGGGGGSGHGSSSGTKSSKKKNQ). Low complexity predominate over residues 48 to 61 (SSPSAAAAASSSAP). A compositionally biased stretch (gly residues) spans 88-104 (GGGGGGGGGGGGSGHGS). Residues 140–160 (LIFGMFGIVVMVIETELSWGA) traverse the membrane as a helical segment. Residue tyrosine 161 is modified to Phosphotyrosine. The helical transmembrane segment at 169-189 (LALKCLISLSTIILLGLIIVY) threads the bilayer. The chain crosses the membrane as a helical span at residues 215 to 235 (IFFICLEILVCAIHPIPGNYT). The helical transmembrane segment at 257 to 277 (IILSIPMFLRLYLIARVMLLH) threads the bilayer. A helical transmembrane segment spans residues 306–326 (LMTICPGTVLLVFSISLWIIA). The pore-forming intramembrane region spans 346 to 366 (FLGAMWLISITFLSIGYGDMV). A helical transmembrane segment spans residues 375–395 (VCLLTGIMGAGCTALVVAVVA). The calmodulin-binding stretch occupies residues 413 to 489 (DTQLTKRVKN…LVDLAKTQNI (77 aa)). Residues 551–560 (HVTYNAERSR) are compositionally biased toward basic and acidic residues. Residues 551–580 (HVTYNAERSRSSSRRRRSSSTAPPTSSESS) form a disordered region. The segment covering 569–580 (SSTAPPTSSESS) has biased composition (low complexity).

This sequence belongs to the potassium channel KCNN family. KCa2.2/KCNN2 subfamily. As to quaternary structure, homodimer. Heteromultimer with KCNN1 and KCNN3. The complex is composed of 4 channel subunits each of which binds to a calmodulin subunit which regulates the channel activity through calcium-binding. Interacts (via N-terminal domain) with MPP2. In terms of tissue distribution, brain.

Its subcellular location is the membrane. The protein resides in the cytoplasm. It localises to the myofibril. It is found in the sarcomere. The protein localises to the z line. It carries out the reaction K(+)(in) = K(+)(out). Its activity is regulated as follows. Inhibited by bee venom neurotoxin apamin. Inhibited by UCL 1684 and tetraethylammonium (TEA). Its function is as follows. Small conductance calcium-activated potassium channel that mediates the voltage-independent transmembrane transfer of potassium across the cell membrane through a constitutive interaction with calmodulin which binds the intracellular calcium allowing its opening. The current is characterized by a voltage-independent activation, an intracellular calcium concentration increase-dependent activation and a single-channel conductance of about 3 picosiemens. Also presents an inwardly rectifying current, thus reducing its already small outward conductance of potassium ions, which is particularly the case when the membrane potential displays positive values, above + 20 mV. The inward rectification could be due to a blockade of the outward current by intracellular divalent cations such as calcium and magnesium and could also be due to an intrinsic property of the channel pore, independent of intracellular divalent ions. There are three positively charged amino acids in the S6 transmembrane domain, close to the pore, that collectively control the conductance and rectification through an electrostatic mechanism. Additionally, electrostatic contributions from these residues also play an important role in determining the intrinsic open probability of the channel in the absence of calcium, affecting the apparent calcium affinity for activation. Forms an heteromeric complex with calmodulin, which is constitutively associated in a calcium-independent manner. Channel opening is triggered when calcium binds the calmodulin resulting in a rotary movement leading to the formation of the dimeric complex to open the gate. Plays a role in the repolarization phase of cardiac action potential. The sequence is that of Small conductance calcium-activated potassium channel protein 2 from Rattus norvegicus (Rat).